Consider the following 592-residue polypeptide: Aspartate--tRNA ligase (592 aa).

Position 173 (Glu-173) interacts with L-aspartate. The interval 197–200 is aspartate; it reads QLFK. Position 219 (Arg-219) interacts with L-aspartate. ATP is bound by residues 219 to 221 and Gln-228; that span reads RDE. Residue His-448 participates in L-aspartate binding. Glu-482 serves as a coordination point for ATP. L-aspartate is bound at residue Arg-489. Residue 534-537 participates in ATP binding; it reads GLDR.

The protein belongs to the class-II aminoacyl-tRNA synthetase family. Type 1 subfamily. In terms of assembly, homodimer.

The protein resides in the cytoplasm. The catalysed reaction is tRNA(Asp) + L-aspartate + ATP = L-aspartyl-tRNA(Asp) + AMP + diphosphate. Its function is as follows. Catalyzes the attachment of L-aspartate to tRNA(Asp) in a two-step reaction: L-aspartate is first activated by ATP to form Asp-AMP and then transferred to the acceptor end of tRNA(Asp). The sequence is that of Aspartate--tRNA ligase from Shewanella baltica (strain OS223).